The following is a 696-amino-acid chain: Protein OS-9 homolog (696 aa).

The signal sequence occupies residues 1–15 (MLVVAFASLLGAARA). N-linked (GlcNAc...) asparagine glycosylation is found at Asn35, Asn46, and Asn68. Residues 106 to 224 (NQCLVSQNGF…QVIVPDLCQL (119 aa)) form the MRH domain. Cys108 and Cys121 are joined by a disulfide. A mannooligosaccharide derivative is bound by residues Trp116, Gln128, Asp178, Arg184, Glu206, and Tyr212. Disulfide bonds link Cys177-Cys210 and Cys192-Cys222. 3 N-linked (GlcNAc...) asparagine glycosylation sites follow: Asn276, Asn290, and Asn372. 2 disordered regions span residues 450–600 (IEAS…DNSD) and 667–696 (TLGNNDGVASDVKDEEVVESDRNGVIDDEL). Polar residues predominate over residues 458-467 (TKASESTPVS). A compositionally biased stretch (basic and acidic residues) spans 482–498 (RSRDKEEYFKENEKQGE). Polar residues-rich tracts occupy residues 499 to 518 (ENNAQVPFSAHNNEQHGTIS), 528 to 553 (NQKQLANTQKGDTDTPPQSSQSSAND), and 585 to 597 (NIDNSSGRSTLND). N-linked (GlcNAc...) asparagine glycosylation is present at Asn588. A compositionally biased stretch (basic and acidic residues) spans 685–696 (ESDRNGVIDDEL).

This sequence belongs to the OS-9 family. Interacts with missfolded ER lumenal proteins.

It is found in the endoplasmic reticulum membrane. Its function is as follows. Lectin involved in the quality control of the secretory pathway. As a member of the endoplasmic reticulum-associated degradation lumenal (ERAD-L) surveillance system, targets misfolded endoplasmic reticulum lumenal glycoproteins for degradation. The sequence is that of Protein OS-9 homolog (YOS9) from Candida glabrata (strain ATCC 2001 / BCRC 20586 / JCM 3761 / NBRC 0622 / NRRL Y-65 / CBS 138) (Yeast).